Reading from the N-terminus, the 293-residue chain is Undecaprenyl-diphosphatase (293 aa).

Transmembrane regions (helical) follow at residues 57-77, 106-126, 134-154, 172-192, 212-232, 239-259, and 268-288; these read PGVS…IVYF, LAIA…KLFW, IRSL…LALA, GFVV…RSGS, FLLG…DAFA, VLPL…AIDW, and STWI…AWWL.

Belongs to the UppP family.

The protein localises to the cell inner membrane. The enzyme catalyses di-trans,octa-cis-undecaprenyl diphosphate + H2O = di-trans,octa-cis-undecaprenyl phosphate + phosphate + H(+). In terms of biological role, catalyzes the dephosphorylation of undecaprenyl diphosphate (UPP). Confers resistance to bacitracin. The protein is Undecaprenyl-diphosphatase of Prochlorococcus marinus (strain MIT 9303).